The following is a 223-amino-acid chain: Ribonuclease T (223 aa).

Residues 20-194 form the Exonuclease domain; that stretch reads VVIDVETAGF…YDTNQTALLF (175 aa). Mg(2+) contacts are provided by Asp-23, Glu-25, His-181, and Asp-186. His-181 serves as the catalytic Proton donor/acceptor.

It belongs to the RNase T family. In terms of assembly, homodimer. It depends on Mg(2+) as a cofactor.

Functionally, trims short 3' overhangs of a variety of RNA species, leaving a one or two nucleotide 3' overhang. Responsible for the end-turnover of tRNA: specifically removes the terminal AMP residue from uncharged tRNA (tRNA-C-C-A). Also appears to be involved in tRNA biosynthesis. This is Ribonuclease T from Pectobacterium atrosepticum (strain SCRI 1043 / ATCC BAA-672) (Erwinia carotovora subsp. atroseptica).